We begin with the raw amino-acid sequence, 509 residues long: Proton-gated ion channel subunit pbo-5 (509 aa).

A signal peptide spans 1–21 (MTRLSILQHLLTFLILSKINA). Topologically, residues 22 to 275 (TSTTESYFDS…ISLKRRPLFY (254 aa)) are extracellular. Cys-193 and Cys-207 form a disulfide bridge. 3 consecutive transmembrane segments (helical) span residues 276–296 (MVTLTFPSYIMCAISVVGLFA), 310–330 (LGVTAILTMAVLSLVVSEKVP), and 336–356 (VPLLVAYFLFNMVIVSIAAMT). Residues 357–487 (TGIVMKVHRL…GYVRISERLD (131 aa)) lie on the Cytoplasmic side of the membrane. A helical transmembrane segment spans residues 488–508 (ILFMFLFLSTVTIPVAVLFYL).

The protein belongs to the ligand-gated ion channel (TC 1.A.9) family. Acetylcholine receptor (TC 1.A.9.1) subfamily. The functional channel is a heterooligomer of pbo-5 and pbo-6. May self-associate to form homooligomers with negligible ion channel activity. As to expression, expressed in the posterior body muscles. Also detected in the RIFL, RIFR and RIS head neurons.

It localises to the membrane. Forms a proton-gated ion channel with pbo-6 that is activated by acidification of the posterior coelomic space, leading to posterior body wall muscle contraction (pBoc) during the defecation cycle. Probably by regulating the defecation motor program, required for fatty acid uptake by intestinal cells. Does not bind neurotransmitters such as acetylcholine, gamma-aminobutyric acid, glycine, serotonin, glutamate or choline. This chain is Proton-gated ion channel subunit pbo-5, found in Caenorhabditis elegans.